A 599-amino-acid chain; its full sequence is Thiamine transporter THI72 (599 aa).

Transmembrane regions (helical) follow at residues 42 to 62, 78 to 98, 112 to 132, 174 to 194, 197 to 217, 280 to 300, 333 to 353, 372 to 392, 395 to 415, 447 to 467, and 484 to 504; these read WGFWSNFAYWGVLSFNVGMWI, IGAFIIADLLTILFALANSCP, FVFGIYGSALGIIIRILMSIV, LIGFIIFHILTAFCYFMKPYH, YILIWSCVGTFFAMLGMVIYL, IVALLIPATLIPVFGIIGASA, FFCGFCFVMSQISYTISNCGF, GAIFAACVSWACLPWNFYNSS, FLTVMSSFGVVMTPIITVMIC, AIVAWVCGMAPGLPGIAWEVN, and SFFSFLISFFVYWGLCLLFPF. The interval 553-599 is disordered; the sequence is HEYKPESSDDELPELTKTSSENTKVFEIVHQKDNEKESSTSSEKQIA. Phosphoserine occurs at positions 560 and 572. Basic and acidic residues predominate over residues 579–590; the sequence is EIVHQKDNEKES.

It belongs to the purine-cytosine permease (2.A.39) family.

The protein resides in the membrane. Low affinity thiamine transporter responsible for intake of thiamine. It is possible that the primary function is the uptake of closely related compounds and that thiamine transport is a secondary activity of these proteins. The chain is Thiamine transporter THI72 (THI72) from Saccharomyces cerevisiae (strain ATCC 204508 / S288c) (Baker's yeast).